The sequence spans 327 residues: MAMTAEVKDELSRLVVNSVSARRAEVASLLRFAGGLHIVSGRVVVEAEVDLGIIARRLRKDIYDLYGYNAVVHMLSASGIRKGTRYVVRVAKDGEALARQTGLLDLRGRPVRGLPAQVVGGSVADAEAAWRGAFLAHGSLTEPGRSSALEVSCPGPEAALALVGAARRLGVSAKAREVRGSDRVVVRDGEAIGALLTRMGAQDTRLTWEERRMRREVRATANRLANFDDANLRRSARAAVAAAARVERALEILGDTVPDHLASAGKLRVEHRQASLEELGRLADPPMTKDAVAGRIRRLLSMADRKAKQDGIPDTESAVTPDLLEDA.

The H-T-H motif DNA-binding region spans 275–308 (SLEELGRLADPPMTKDAVAGRIRRLLSMADRKAK). The interval 304-327 (DRKAKQDGIPDTESAVTPDLLEDA) is disordered.

It belongs to the WhiA family.

Its function is as follows. Involved in cell division and chromosome segregation. The sequence is that of Probable cell division protein WhiA from Mycobacterium sp. (strain MCS).